The following is a 163-amino-acid chain: Crossover junction endodeoxyribonuclease RuvC (163 aa).

Residues Asp7, Glu68, and His142 contribute to the active site. Positions 7, 68, and 142 each coordinate Mg(2+).

This sequence belongs to the RuvC family. In terms of assembly, homodimer which binds Holliday junction (HJ) DNA. The HJ becomes 2-fold symmetrical on binding to RuvC with unstacked arms; it has a different conformation from HJ DNA in complex with RuvA. In the full resolvosome a probable DNA-RuvA(4)-RuvB(12)-RuvC(2) complex forms which resolves the HJ. It depends on Mg(2+) as a cofactor.

It localises to the cytoplasm. The enzyme catalyses Endonucleolytic cleavage at a junction such as a reciprocal single-stranded crossover between two homologous DNA duplexes (Holliday junction).. Its function is as follows. The RuvA-RuvB-RuvC complex processes Holliday junction (HJ) DNA during genetic recombination and DNA repair. Endonuclease that resolves HJ intermediates. Cleaves cruciform DNA by making single-stranded nicks across the HJ at symmetrical positions within the homologous arms, yielding a 5'-phosphate and a 3'-hydroxyl group; requires a central core of homology in the junction. The consensus cleavage sequence is 5'-(A/T)TT(C/G)-3'. Cleavage occurs on the 3'-side of the TT dinucleotide at the point of strand exchange. HJ branch migration catalyzed by RuvA-RuvB allows RuvC to scan DNA until it finds its consensus sequence, where it cleaves and resolves the cruciform DNA. The protein is Crossover junction endodeoxyribonuclease RuvC of Anaplasma phagocytophilum (strain HZ).